The sequence spans 419 residues: Serine hydroxymethyltransferase (419 aa).

(6S)-5,6,7,8-tetrahydrofolate is bound by residues L118 and 122 to 124 (GHL). K227 carries the post-translational modification N6-(pyridoxal phosphate)lysine.

It belongs to the SHMT family. As to quaternary structure, homodimer. It depends on pyridoxal 5'-phosphate as a cofactor.

The protein localises to the cytoplasm. It carries out the reaction (6R)-5,10-methylene-5,6,7,8-tetrahydrofolate + glycine + H2O = (6S)-5,6,7,8-tetrahydrofolate + L-serine. The protein operates within one-carbon metabolism; tetrahydrofolate interconversion. Its pathway is amino-acid biosynthesis; glycine biosynthesis; glycine from L-serine: step 1/1. Catalyzes the reversible interconversion of serine and glycine with tetrahydrofolate (THF) serving as the one-carbon carrier. This reaction serves as the major source of one-carbon groups required for the biosynthesis of purines, thymidylate, methionine, and other important biomolecules. Also exhibits THF-independent aldolase activity toward beta-hydroxyamino acids, producing glycine and aldehydes, via a retro-aldol mechanism. The sequence is that of Serine hydroxymethyltransferase from Chloroflexus aurantiacus (strain ATCC 29364 / DSM 637 / Y-400-fl).